Consider the following 383-residue polypeptide: S-adenosylmethionine synthase (383 aa).

His-15 provides a ligand contact to ATP. Asp-17 contributes to the Mg(2+) binding site. Glu-43 contributes to the K(+) binding site. L-methionine contacts are provided by Glu-56 and Gln-99. The flexible loop stretch occupies residues 99–109 (QSPDINQGVDR). Residues 164–166 (DAK), 230–231 (RF), Asp-239, 245–246 (RK), Ala-262, and Lys-266 contribute to the ATP site. Residue Asp-239 participates in L-methionine binding. An L-methionine-binding site is contributed by Lys-270.

Belongs to the AdoMet synthase family. As to quaternary structure, homotetramer; dimer of dimers. It depends on Mg(2+) as a cofactor. Requires K(+) as cofactor.

Its subcellular location is the cytoplasm. It catalyses the reaction L-methionine + ATP + H2O = S-adenosyl-L-methionine + phosphate + diphosphate. It functions in the pathway amino-acid biosynthesis; S-adenosyl-L-methionine biosynthesis; S-adenosyl-L-methionine from L-methionine: step 1/1. In terms of biological role, catalyzes the formation of S-adenosylmethionine (AdoMet) from methionine and ATP. The overall synthetic reaction is composed of two sequential steps, AdoMet formation and the subsequent tripolyphosphate hydrolysis which occurs prior to release of AdoMet from the enzyme. The chain is S-adenosylmethionine synthase from Shewanella oneidensis (strain ATCC 700550 / JCM 31522 / CIP 106686 / LMG 19005 / NCIMB 14063 / MR-1).